The following is a 321-amino-acid chain: tRNA(Ile)-lysidine synthase (321 aa).

An ATP-binding site is contributed by 30–35 (SGGSDS).

It belongs to the tRNA(Ile)-lysidine synthase family.

It is found in the cytoplasm. The catalysed reaction is cytidine(34) in tRNA(Ile2) + L-lysine + ATP = lysidine(34) in tRNA(Ile2) + AMP + diphosphate + H(+). Functionally, ligates lysine onto the cytidine present at position 34 of the AUA codon-specific tRNA(Ile) that contains the anticodon CAU, in an ATP-dependent manner. Cytidine is converted to lysidine, thus changing the amino acid specificity of the tRNA from methionine to isoleucine. The sequence is that of tRNA(Ile)-lysidine synthase from Chlamydia trachomatis serovar A (strain ATCC VR-571B / DSM 19440 / HAR-13).